A 541-amino-acid polypeptide reads, in one-letter code: Chaperonin GroEL 2 (541 aa).

ATP is bound by residues 29–32 (TLGP), 86–90 (DGTTT), glycine 413, 476–478 (NAA), and aspartate 492.

This sequence belongs to the chaperonin (HSP60) family. Forms a cylinder of 14 subunits composed of two heptameric rings stacked back-to-back. Interacts with the co-chaperonin GroES.

The protein resides in the secreted. It is found in the capsule. The protein localises to the cell surface. It localises to the cell wall. The enzyme catalyses ATP + H2O + a folded polypeptide = ADP + phosphate + an unfolded polypeptide.. In terms of biological role, together with its co-chaperonin GroES, plays an essential role in assisting protein folding. The GroEL-GroES system forms a nano-cage that allows encapsulation of the non-native substrate proteins and provides a physical environment optimized to promote and accelerate protein folding. This is Chaperonin GroEL 2 from Mycobacterium avium (strain 104).